We begin with the raw amino-acid sequence, 176 residues long: COA8 family protein CG14806, mitochondrial (176 aa).

Residues 1-23 constitute a mitochondrion transit peptide; that stretch reads MNKCFRCQPRISLFQFSLPRCYA.

It belongs to the COA8 family.

Its subcellular location is the mitochondrion inner membrane. Its function is as follows. May be required for cytochrome c complex (COX) assembly and function, COX being the terminal component of the mitochondrial respiratory chain. (Microbial infection) Required for optimal replication of E.chaffeensis. The sequence is that of COA8 family protein CG14806, mitochondrial from Drosophila melanogaster (Fruit fly).